A 182-amino-acid polypeptide reads, in one-letter code: Isopentenyl-diphosphate Delta-isomerase (182 aa).

2 residues coordinate Mn(2+): H25 and H32. Residues L30–M164 enclose the Nudix hydrolase domain. C67 is a catalytic residue. A Mn(2+)-binding site is contributed by H69. E87 contributes to the Mg(2+) binding site. Positions 114 and 116 each coordinate Mn(2+). Residue E116 is part of the active site.

The protein belongs to the IPP isomerase type 1 family. Homodimer. Requires Mg(2+) as cofactor. Mn(2+) serves as cofactor.

It localises to the cytoplasm. The enzyme catalyses isopentenyl diphosphate = dimethylallyl diphosphate. Its pathway is isoprenoid biosynthesis; dimethylallyl diphosphate biosynthesis; dimethylallyl diphosphate from isopentenyl diphosphate: step 1/1. In terms of biological role, catalyzes the 1,3-allylic rearrangement of the homoallylic substrate isopentenyl (IPP) to its highly electrophilic allylic isomer, dimethylallyl diphosphate (DMAPP). The sequence is that of Isopentenyl-diphosphate Delta-isomerase from Shigella flexneri serotype 5b (strain 8401).